Here is a 522-residue protein sequence, read N- to C-terminus: Transactivator/viroplasmin protein (522 aa).

Residues 488–522 form a disordered region; it reads DASADEGTTDKSGPPPTRSIVEKEDVPNTSSKQVD.

It belongs to the caulimoviridae viroplasmin family.

It is found in the host cytoplasm. Enhances the ribosomal termination-reinitiation event leading to the translation of major open reading frames on the polycistronic viral RNAs. The chain is Transactivator/viroplasmin protein from Cauliflower mosaic virus (strain D/H) (CaMV).